Consider the following 537-residue polypeptide: Endoprotease aex-5 (537 aa).

A signal peptide spans 1–17 (MKLIFLLLLFGVSPIVC). Positions 18 to 99 (QDFEDGVFLA…KLQGFRRYKR (82 aa)) are excised as a propeptide. Residues 111 to 413 (VWNLTPSLYI…FGLLNAQKLV (303 aa)) enclose the Peptidase S8 domain. The N-linked (GlcNAc...) asparagine glycan is linked to N129. Active-site charge relay system residues include D139 and H178. A disulfide bridge links C286 with C316. S346 (charge relay system) is an active-site residue. N-linked (GlcNAc...) asparagine glycosylation occurs at N380. The P/Homo B domain occupies 407–537 (LNAQKLVVMA…KMFKVVGTMS (131 aa)).

It belongs to the peptidase S8 family. Furin subfamily.

Its subcellular location is the secreted. Its function is as follows. Probable serine endoprotease which cleaves preproteins at paired basic amino acids. May process FMRFamide-like (flp) and neuropeptide-like protein (nlp) neuropeptides. In muscles, involved in neuronal retrograde signaling by regulating presynaptic activity and localization of synaptic vesicle fusion protein unc-13 at the neuromuscular junction (NMJ). Acts in the intestine to regulate anterior body muscle contractions (aBOC) and the expulsion steps during the defecation motor program (DMP). Probably by regulating DMP, required for fatty acid uptake by intestinal cells and therefore regulates the levels of triglycerides in the intestine. Plays a role in locomotion. The polypeptide is Endoprotease aex-5 (Caenorhabditis elegans).